The chain runs to 287 residues: 4-diphosphocytidyl-2-C-methyl-D-erythritol kinase (287 aa).

Lys-11 is a catalytic residue. 93-103 (PFGAGLGGGSS) is an ATP binding site. Residue Asp-135 is part of the active site.

Belongs to the GHMP kinase family. IspE subfamily.

The enzyme catalyses 4-CDP-2-C-methyl-D-erythritol + ATP = 4-CDP-2-C-methyl-D-erythritol 2-phosphate + ADP + H(+). The protein operates within isoprenoid biosynthesis; isopentenyl diphosphate biosynthesis via DXP pathway; isopentenyl diphosphate from 1-deoxy-D-xylulose 5-phosphate: step 3/6. Functionally, catalyzes the phosphorylation of the position 2 hydroxy group of 4-diphosphocytidyl-2C-methyl-D-erythritol. The chain is 4-diphosphocytidyl-2-C-methyl-D-erythritol kinase from Chlorobium luteolum (strain DSM 273 / BCRC 81028 / 2530) (Pelodictyon luteolum).